Reading from the N-terminus, the 488-residue chain is Glutamyl-tRNA(Gln) amidotransferase subunit A (488 aa).

Residues lysine 78 and serine 153 each act as charge relay system in the active site. Serine 177 functions as the Acyl-ester intermediate in the catalytic mechanism.

Belongs to the amidase family. GatA subfamily. In terms of assembly, heterotrimer of A, B and C subunits.

The catalysed reaction is L-glutamyl-tRNA(Gln) + L-glutamine + ATP + H2O = L-glutaminyl-tRNA(Gln) + L-glutamate + ADP + phosphate + H(+). In terms of biological role, allows the formation of correctly charged Gln-tRNA(Gln) through the transamidation of misacylated Glu-tRNA(Gln) in organisms which lack glutaminyl-tRNA synthetase. The reaction takes place in the presence of glutamine and ATP through an activated gamma-phospho-Glu-tRNA(Gln). The sequence is that of Glutamyl-tRNA(Gln) amidotransferase subunit A from Caldanaerobacter subterraneus subsp. tengcongensis (strain DSM 15242 / JCM 11007 / NBRC 100824 / MB4) (Thermoanaerobacter tengcongensis).